Here is a 498-residue protein sequence, read N- to C-terminus: Putative BTB/POZ domain-containing protein L67 (498 aa).

A BTB domain is found at 26-96; it reads SDINITLSDN…MYGISLSEIN (71 aa).

It belongs to the mimivirus BTB/WD family.

The chain is Putative BTB/POZ domain-containing protein L67 from Acanthamoeba polyphaga (Amoeba).